A 213-amino-acid chain; its full sequence is Riboflavin synthase (213 aa).

Lumazine-binding repeat units follow at residues 1 to 97 (MFTG…IGGH) and 98 to 195 (LMSG…VDTV). Residues 4-6 (GIV), 48-50 (CLT), 62-67 (DLMKET), 101-103 (GHI), Lys-137, 146-148 (SLT), and 160-165 (HLIPET) contribute to the 2,4-dihydroxypteridine site.

In terms of assembly, homotrimer. Unlike in B.subtilis, does not interact with 6,7-dimethyl-8-ribityllumazine synthase.

It carries out the reaction 2 6,7-dimethyl-8-(1-D-ribityl)lumazine + H(+) = 5-amino-6-(D-ribitylamino)uracil + riboflavin. It functions in the pathway cofactor biosynthesis; riboflavin biosynthesis; riboflavin from 2-hydroxy-3-oxobutyl phosphate and 5-amino-6-(D-ribitylamino)uracil: step 2/2. Functionally, catalyzes the dismutation of two molecules of 6,7-dimethyl-8-ribityllumazine, resulting in the formation of riboflavin and 5-amino-6-(D-ribitylamino)uracil. In Escherichia coli (strain K12), this protein is Riboflavin synthase (ribC).